A 266-amino-acid chain; its full sequence is Undecaprenyl-diphosphatase (266 aa).

The next 8 helical transmembrane spans lie at 1–21 (MVVILAIVEGITEFLPISSTG), 43–63 (FLIIIQLGAIFSVVVYFWKDI), 81–101 (LKIIVGVLPAMVIGLLLDDII), 109–129 (VLIVAITLIAYGVIFIGIEVV), 159–179 (LAMIPGTSRSGATIIGALLLG), 183–203 (PLAAEFSFYLAIPTMFGATAL), 219–239 (YLALGSAIAFVVAYIVIKWFM), and 246–266 (SFASFGLYRIILGIIVIVLLY).

It belongs to the UppP family.

It localises to the cell inner membrane. It catalyses the reaction di-trans,octa-cis-undecaprenyl diphosphate + H2O = di-trans,octa-cis-undecaprenyl phosphate + phosphate + H(+). Functionally, catalyzes the dephosphorylation of undecaprenyl diphosphate (UPP). Confers resistance to bacitracin. In Fusobacterium nucleatum subsp. nucleatum (strain ATCC 25586 / DSM 15643 / BCRC 10681 / CIP 101130 / JCM 8532 / KCTC 2640 / LMG 13131 / VPI 4355), this protein is Undecaprenyl-diphosphatase.